Here is a 225-residue protein sequence, read N- to C-terminus: Small ribosomal subunit protein mS26 (225 aa).

Belongs to the mitochondrion-specific ribosomal protein mS26 family. Component of the mitochondrial ribosome small subunit (28S) which comprises a 12S rRNA and about 30 distinct proteins.

The protein localises to the mitochondrion. The chain is Small ribosomal subunit protein mS26 (mRpS26) from Drosophila melanogaster (Fruit fly).